The primary structure comprises 137 residues: Small ribosomal subunit protein uS11 (137 aa).

The segment covering 1 to 11 has biased composition (low complexity); it reads MAKQAKAGAAR. The disordered stretch occupies residues 1–32; that stretch reads MAKQAKAGAARRPQRGRRRERKNVPRGQAHVQ. A compositionally biased stretch (basic residues) spans 12–21; sequence RPQRGRRRER.

This sequence belongs to the universal ribosomal protein uS11 family. As to quaternary structure, part of the 30S ribosomal subunit. Interacts with proteins S7 and S18. Binds to IF-3.

In terms of biological role, located on the platform of the 30S subunit, it bridges several disparate RNA helices of the 16S rRNA. Forms part of the Shine-Dalgarno cleft in the 70S ribosome. This Herpetosiphon aurantiacus (strain ATCC 23779 / DSM 785 / 114-95) protein is Small ribosomal subunit protein uS11.